Reading from the N-terminus, the 629-residue chain is uncharacterized protein (629 aa).

Disordered regions lie at residues serine 101 to threonine 126, proline 172 to aspartate 209, serine 315 to arginine 339, and glycine 448 to proline 468. A compositionally biased stretch (acidic residues) spans threonine 200–aspartate 209. The residue at position 334 (serine 334) is a Phosphoserine. Residues glycine 448–glutamate 463 are compositionally biased toward polar residues.

This is an uncharacterized protein from Schizosaccharomyces pombe (strain 972 / ATCC 24843) (Fission yeast).